The sequence spans 341 residues: Glyceraldehyde-3-phosphate dehydrogenase 2 (341 aa).

NAD(+) is bound by residues 12-13, R78, and T120; that span reads RI. D-glyceraldehyde 3-phosphate contacts are provided by residues 152–154 and T183; that span reads SCT. Residue C153 is the Nucleophile of the active site. N184 contributes to the NAD(+) binding site. D-glyceraldehyde 3-phosphate-binding positions include R198, 211-212, and R234; that span reads TG. Residue N313 coordinates NAD(+).

Belongs to the glyceraldehyde-3-phosphate dehydrogenase family. As to quaternary structure, homotetramer.

The protein resides in the cytoplasm. The catalysed reaction is D-glyceraldehyde 3-phosphate + phosphate + NAD(+) = (2R)-3-phospho-glyceroyl phosphate + NADH + H(+). It participates in carbohydrate degradation; glycolysis; pyruvate from D-glyceraldehyde 3-phosphate: step 1/5. In terms of biological role, catalyzes the oxidative phosphorylation of glyceraldehyde 3-phosphate (G3P) to 1,3-bisphosphoglycerate (BPG) using the cofactor NAD. The first reaction step involves the formation of a hemiacetal intermediate between G3P and a cysteine residue, and this hemiacetal intermediate is then oxidized to a thioester, with concomitant reduction of NAD to NADH. The reduced NADH is then exchanged with the second NAD, and the thioester is attacked by a nucleophilic inorganic phosphate to produce BPG. The chain is Glyceraldehyde-3-phosphate dehydrogenase 2 (gapA2) from Staphylococcus epidermidis (strain ATCC 12228 / FDA PCI 1200).